Consider the following 372-residue polypeptide: sn-glycerol-3-phosphate import ATP-binding protein UgpC (372 aa).

The ABC transporter domain maps to 2 to 233; the sequence is LDIQQLVKTY…PASTFVASFI (232 aa). Residue 35–42 participates in ATP binding; sequence GPSGCGKS.

It belongs to the ABC transporter superfamily. sn-glycerol-3-phosphate importer (TC 3.A.1.1.3) family. As to quaternary structure, the complex is composed of two ATP-binding proteins (UgpC), two transmembrane proteins (UgpA and UgpE) and a solute-binding protein (UgpB).

The protein localises to the cell inner membrane. It catalyses the reaction sn-glycerol 3-phosphate(out) + ATP + H2O = sn-glycerol 3-phosphate(in) + ADP + phosphate + H(+). In terms of biological role, part of the ABC transporter complex UgpBAEC involved in sn-glycerol-3-phosphate (G3P) import. Responsible for energy coupling to the transport system. This Vibrio vulnificus (strain CMCP6) protein is sn-glycerol-3-phosphate import ATP-binding protein UgpC.